The chain runs to 152 residues: Succinate dehydrogenase [ubiquinone] cytochrome b small subunit B, mitochondrial (152 aa).

The transit peptide at 1 to 21 directs the protein to the mitochondrion; sequence MATLLRVSSLCRANRASAFKS. Residues 22-56 are Mitochondrial matrix-facing; the sequence is LLIRPLPCLSQDLHMVQTSQIHTSPNHHAGSKAAS. The chain crosses the membrane as a helical span at residues 57–78; sequence MHWTGERALSVALLGLLPAAYL. The Mitochondrial intermembrane segment spans residues 79–83; sequence YPGAA. The chain crosses the membrane as a helical span at residues 84 to 104; it reads MDYSLAAALTLHGHWGLGQVV. His95 lines the heme b pocket. At 105–113 the chain is on the mitochondrial matrix side; sequence TDYVHGETK. Tyr107 is an a ubiquinone binding site. Residues 114 to 135 traverse the membrane as a helical segment; it reads IKMANTSLFALSALTFAGLCYF. Residues 136–152 are Mitochondrial intermembrane-facing; sequence NYHDVGICKAVAMLWSL.

The protein belongs to the CybS family. As to quaternary structure, component of complex II composed of four subunits: the flavoprotein (FP) SDHA, iron-sulfur protein (IP) SDHB, and a cytochrome b560 composed of SDHC and SDHD.

It localises to the mitochondrion inner membrane. Its pathway is carbohydrate metabolism; tricarboxylic acid cycle. Functionally, membrane-anchoring subunit of succinate dehydrogenase (SDH) that is involved in complex II of the mitochondrial electron transport chain and is responsible for transferring electrons from succinate to ubiquinone (coenzyme Q). SDH also oxidizes malate to the non-canonical enol form of oxaloacetate, enol-oxaloacetate. Enol-oxaloacetate, which is a potent inhibitor of the succinate dehydrogenase activity, is further isomerized into keto-oxaloacetate. This is Succinate dehydrogenase [ubiquinone] cytochrome b small subunit B, mitochondrial (sdhd-b) from Xenopus laevis (African clawed frog).